Reading from the N-terminus, the 458-residue chain is ATP synthase subunit beta (458 aa).

148-155 (GGAGVGKT) is a binding site for ATP.

The protein belongs to the ATPase alpha/beta chains family. In terms of assembly, F-type ATPases have 2 components, CF(1) - the catalytic core - and CF(0) - the membrane proton channel. CF(1) has five subunits: alpha(3), beta(3), gamma(1), delta(1), epsilon(1). CF(0) has three main subunits: a(1), b(2) and c(9-12). The alpha and beta chains form an alternating ring which encloses part of the gamma chain. CF(1) is attached to CF(0) by a central stalk formed by the gamma and epsilon chains, while a peripheral stalk is formed by the delta and b chains.

Its subcellular location is the cell inner membrane. The enzyme catalyses ATP + H2O + 4 H(+)(in) = ADP + phosphate + 5 H(+)(out). In terms of biological role, produces ATP from ADP in the presence of a proton gradient across the membrane. The catalytic sites are hosted primarily by the beta subunits. The chain is ATP synthase subunit beta from Francisella tularensis subsp. mediasiatica (strain FSC147).